We begin with the raw amino-acid sequence, 108 residues long: UPF0145 protein LCABL_07110 (108 aa).

Belongs to the UPF0145 family.

The sequence is that of UPF0145 protein LCABL_07110 from Lacticaseibacillus casei (strain BL23) (Lactobacillus casei).